A 122-amino-acid polypeptide reads, in one-letter code: Urease subunit beta (122 aa).

Belongs to the urease beta subunit family. As to quaternary structure, heterotrimer of UreA (gamma), UreB (beta) and UreC (alpha) subunits. Three heterotrimers associate to form the active enzyme.

It is found in the cytoplasm. It carries out the reaction urea + 2 H2O + H(+) = hydrogencarbonate + 2 NH4(+). It functions in the pathway nitrogen metabolism; urea degradation; CO(2) and NH(3) from urea (urease route): step 1/1. The sequence is that of Urease subunit beta from Lysinibacillus sphaericus (strain C3-41).